The following is a 147-amino-acid chain: UPF0306 protein YhbP (147 aa).

Belongs to the UPF0306 family.

The protein is UPF0306 protein YhbP of Escherichia coli O1:K1 / APEC.